The primary structure comprises 41 residues: Large ribosomal subunit protein bL36 (41 aa).

It belongs to the bacterial ribosomal protein bL36 family.

The polypeptide is Large ribosomal subunit protein bL36 (Neisseria gonorrhoeae (strain ATCC 700825 / FA 1090)).